Reading from the N-terminus, the 495-residue chain is UDP-N-acetylmuramoyl-L-alanyl-D-glutamate--2,6-diaminopimelate ligase (495 aa).

UDP-N-acetyl-alpha-D-muramoyl-L-alanyl-D-glutamate is bound by residues Leu27, Ser29, and His44 to Ala46. Residue Gly116 to Thr122 participates in ATP binding. UDP-N-acetyl-alpha-D-muramoyl-L-alanyl-D-glutamate-binding positions include Asn157, Thr158–Thr159, Ser185, Gln191, and Arg193. Residue Lys225 is modified to N6-carboxylysine. Residues Arg390, Asp414–Arg417, Gly465, and Glu469 contribute to the meso-2,6-diaminopimelate site. The Meso-diaminopimelate recognition motif motif lies at Asp414–Arg417.

Belongs to the MurCDEF family. MurE subfamily. Mg(2+) is required as a cofactor. Carboxylation is probably crucial for Mg(2+) binding and, consequently, for the gamma-phosphate positioning of ATP.

Its subcellular location is the cytoplasm. It catalyses the reaction UDP-N-acetyl-alpha-D-muramoyl-L-alanyl-D-glutamate + meso-2,6-diaminopimelate + ATP = UDP-N-acetyl-alpha-D-muramoyl-L-alanyl-gamma-D-glutamyl-meso-2,6-diaminopimelate + ADP + phosphate + H(+). It functions in the pathway cell wall biogenesis; peptidoglycan biosynthesis. Functionally, catalyzes the addition of meso-diaminopimelic acid to the nucleotide precursor UDP-N-acetylmuramoyl-L-alanyl-D-glutamate (UMAG) in the biosynthesis of bacterial cell-wall peptidoglycan. This Escherichia coli O157:H7 protein is UDP-N-acetylmuramoyl-L-alanyl-D-glutamate--2,6-diaminopimelate ligase.